The primary structure comprises 366 residues: Holliday junction branch migration complex subunit RuvB (366 aa).

The tract at residues 1–48 is disordered; the sequence is MIDRLMAREAIYQQSNPDPGGDPPEDGPPHGKNAADGGDEPDRGPDPD. Positions 21–212 are large ATPase domain (RuvB-L); sequence GDPPEDGPPH…FQIREHLGWY (192 aa). Residues leucine 51, arginine 52, glycine 93, lysine 96, threonine 97, threonine 98, 159–161, arginine 202, tyrosine 212, and arginine 249 each bind ATP; that span reads EDF. A Mg(2+)-binding site is contributed by threonine 97. Residues 213 to 283 form a small ATPAse domain (RuvB-S) region; sequence TRKELAEIVL…VCEAALDMIG (71 aa). The head domain (RuvB-H) stretch occupies residues 286-366; sequence HLGLDKQDRN…KRQMPDRPLS (81 aa). Residues arginine 341, arginine 343, and arginine 346 each contribute to the DNA site.

This sequence belongs to the RuvB family. As to quaternary structure, homohexamer. Forms an RuvA(8)-RuvB(12)-Holliday junction (HJ) complex. HJ DNA is sandwiched between 2 RuvA tetramers; dsDNA enters through RuvA and exits via RuvB. An RuvB hexamer assembles on each DNA strand where it exits the tetramer. Each RuvB hexamer is contacted by two RuvA subunits (via domain III) on 2 adjacent RuvB subunits; this complex drives branch migration. In the full resolvosome a probable DNA-RuvA(4)-RuvB(12)-RuvC(2) complex forms which resolves the HJ.

Its subcellular location is the cytoplasm. The catalysed reaction is ATP + H2O = ADP + phosphate + H(+). The RuvA-RuvB-RuvC complex processes Holliday junction (HJ) DNA during genetic recombination and DNA repair, while the RuvA-RuvB complex plays an important role in the rescue of blocked DNA replication forks via replication fork reversal (RFR). RuvA specifically binds to HJ cruciform DNA, conferring on it an open structure. The RuvB hexamer acts as an ATP-dependent pump, pulling dsDNA into and through the RuvAB complex. RuvB forms 2 homohexamers on either side of HJ DNA bound by 1 or 2 RuvA tetramers; 4 subunits per hexamer contact DNA at a time. Coordinated motions by a converter formed by DNA-disengaged RuvB subunits stimulates ATP hydrolysis and nucleotide exchange. Immobilization of the converter enables RuvB to convert the ATP-contained energy into a lever motion, pulling 2 nucleotides of DNA out of the RuvA tetramer per ATP hydrolyzed, thus driving DNA branch migration. The RuvB motors rotate together with the DNA substrate, which together with the progressing nucleotide cycle form the mechanistic basis for DNA recombination by continuous HJ branch migration. Branch migration allows RuvC to scan DNA until it finds its consensus sequence, where it cleaves and resolves cruciform DNA. This chain is Holliday junction branch migration complex subunit RuvB, found in Rhodopirellula baltica (strain DSM 10527 / NCIMB 13988 / SH1).